Reading from the N-terminus, the 481-residue chain is UDP-glycosyltransferase 85A2 (481 aa).

UDP-alpha-D-glucose-binding positions include Ser303, 360–362 (CPQ), 377–385 (HCGWNSTLE), and 399–402 (FAEQ).

This sequence belongs to the UDP-glycosyltransferase family. Expressed in roots, shoots, leaves and flowers.

This chain is UDP-glycosyltransferase 85A2 (UGT85A2), found in Arabidopsis thaliana (Mouse-ear cress).